Reading from the N-terminus, the 295-residue chain is tRNA pseudouridine synthase B (295 aa).

Residue D42 is the Nucleophile of the active site.

The protein belongs to the pseudouridine synthase TruB family. Type 1 subfamily.

It catalyses the reaction uridine(55) in tRNA = pseudouridine(55) in tRNA. Functionally, responsible for synthesis of pseudouridine from uracil-55 in the psi GC loop of transfer RNAs. The protein is tRNA pseudouridine synthase B of Cutibacterium acnes (strain DSM 16379 / KPA171202) (Propionibacterium acnes).